A 709-amino-acid chain; its full sequence is MLEEQLYLLACIFASRADTRNIKKLSTRLGSQSKYLEILCVLWPELDDPKNLLFLRELEEEVQSPEGEETTDEDVIVELLESDSSLIPLIESDTTTRSNRYHELQEFISKKLNNKTLENFEEWLRERILICNEMIPETPLLYSVLWETAKSKVLSTKFIGWVEGVLKPLDHLNKRLHLIFKINEWEKMPDSELFKIIFDGVEDMQGYIGIADVIEDELAPTLSYGKKWETFITEFFNKQQFSLKSDTNYQLFIKLYYSLEKGVKDNSEASRKLQSNVVDILFHNSENLFNLSSLTHKLDELWSILSGFPDEITIEEQKTITALEMKQFMEFFIKCSTKFSFKEIFAITQEEESAQLAHFSSLCHEEFNKANEISSFLQAMYETVLDISKDDKIFTRISMDEKLYSILEILLQMNEFAYIEAIIERFDYSNNTQIYELLVKFFWHFFNNASNGLRKEPEMKKASQTLQIIQKHMSQRAGTNLTKLEVLLEISDKLSHYSINLNKSHNGARDTAFKPSNILEYRDCPLDIISNLLELNPRLYKDLPTTKSLLFGIYDSLSINREGQTGKVEVDLMVLHIDYALVNLDFGTAYELGKQVFEICQEAGQHMMKALGDEHWLTFYQMGKFVDPNWVDNEIPTEIIVLQMSILGRLLEVCPLEEVEIVTSQWSTLELELSARDLVKDKYALDGQNDNKSKVGGIAREIFHNVTNF.

Belongs to the SEC39 family. In terms of assembly, component of a peripheral membrane protein complex consisting of DSL1, SEC39/DSL3 and TIP20. Bound to a SNARE complex consisting of UFE1, USE1, SEC20 and SEC22 or YKT6 through direct interaction of TIP20 with SEC20. Interacts with TIP20 and DSL1.

Its subcellular location is the endoplasmic reticulum membrane. Functionally, required for protein transport between the Golgi and the endoplasmic reticulum. May contribute to tethering of coatomer-coated retrograde transport vesicles to the ER membrane through interaction with and stabilization of the SNARE complex. The protein is Protein transport protein SEC39 of Saccharomyces cerevisiae (strain ATCC 204508 / S288c) (Baker's yeast).